Consider the following 277-residue polypeptide: Small ribosomal subunit protein uS3 (277 aa).

One can recognise a KH type-2 domain in the interval 43–111 (IRQLMSTGME…QVQLNILEVK (69 aa)). Residues 218-228 (QQAAAAPSRGR) show a composition bias toward low complexity. Positions 218–277 (QQAAAAPSRGRGASDRPGRPGGADRGDRRRRTDRPAAEAAPAAEAPAVEAAAPAVEGGQA) are disordered. Basic and acidic residues predominate over residues 229-244 (GASDRPGRPGGADRGD). Residues 254-277 (AEAAPAAEAPAVEAAAPAVEGGQA) are compositionally biased toward low complexity.

The protein belongs to the universal ribosomal protein uS3 family. Part of the 30S ribosomal subunit. Forms a tight complex with proteins S10 and S14.

Binds the lower part of the 30S subunit head. Binds mRNA in the 70S ribosome, positioning it for translation. This Arthrobacter sp. (strain FB24) protein is Small ribosomal subunit protein uS3.